We begin with the raw amino-acid sequence, 382 residues long: ATP phosphoribosyltransferase regulatory subunit (382 aa).

Belongs to the class-II aminoacyl-tRNA synthetase family. HisZ subfamily. In terms of assembly, heteromultimer composed of HisG and HisZ subunits.

The protein localises to the cytoplasm. It participates in amino-acid biosynthesis; L-histidine biosynthesis; L-histidine from 5-phospho-alpha-D-ribose 1-diphosphate: step 1/9. Required for the first step of histidine biosynthesis. May allow the feedback regulation of ATP phosphoribosyltransferase activity by histidine. This is ATP phosphoribosyltransferase regulatory subunit from Burkholderia pseudomallei (strain 668).